A 301-amino-acid chain; its full sequence is uncharacterized protein (301 aa).

Residues M1–S25 form the signal peptide. Residues D26 to T279 are Extracellular-facing. The tract at residues L174–N281 is disordered. Residues N191, N212, N234, and N241 are each glycosylated (N-linked (GlcNAc...) asparagine). Residues S204 to N234 show a composition bias toward low complexity. Positions G254–N281 are enriched in low complexity. Residues G280–M300 traverse the membrane as a helical segment. Residue S301 is a topological domain, cytoplasmic.

It localises to the membrane. This is an uncharacterized protein from Dictyostelium discoideum (Social amoeba).